A 127-amino-acid polypeptide reads, in one-letter code: MORF4 family-associated protein 1 (127 aa).

The stretch at 92–126 forms a coiled coil; sequence RAAKRCEKAEEKAKEIAKMAEMLVELVRRIEKSES.

Belongs to the MORF4 family-associated protein family. In terms of assembly, found in a complex composed of MORF4L1, MRFAP1 and RB1. Interacts via its N-terminus with MORF4L1. Interacts with CSTB and MORF4L2.

Its subcellular location is the nucleus. The protein localises to the cytoplasm. It is found in the perinuclear region. The chain is MORF4 family-associated protein 1 from Homo sapiens (Human).